Here is a 498-residue protein sequence, read N- to C-terminus: Zinc finger protein 79 (498 aa).

The tract at residues 1–23 (MLEEGVLPSPGPALPQEENTGEE) is disordered. A KRAB domain is found at 38–109 (TFFSSVTVAF…EGEDLRSPSP (72 aa)). 11 consecutive C2H2-type zinc fingers follow at residues 193–215 (YACNECGKAFSYCSSLSQHQKSH), 221–243 (YECSECGKAFSQSSSLIQHQRIH), 249–271 (YKCSECGRAFSQNANLTKHQRTH), 277–299 (YRCSECEKAFSDCSALVQHQRIH), 305–327 (YECSDCGKAFRHSANLTNHQRTH), 333–355 (YKCSECGKAFSYCAAFIQHQRIH), 361–383 (YRCAACGKAFSQSANLTNHQRTH), 389–411 (YKCSECGKAFSQSTNLIIHQKTH), 417–439 (YKCNECGKFFSESSALIRHHIIH), 445–467 (YECNECGKAFNQSSSLSQHQRIH), and 473–495 (YECSECGKAFRCSSAFVRHQRLH).

It belongs to the krueppel C2H2-type zinc-finger protein family.

The protein localises to the nucleus. In terms of biological role, may be involved in transcriptional regulation. The polypeptide is Zinc finger protein 79 (ZNF79) (Homo sapiens (Human)).